Consider the following 405-residue polypeptide: F-box/kelch-repeat protein At2g43445 (405 aa).

An F-box domain is found at 7–53; sequence NTNSIYIVSELLEEIFLGLPLKSILKFKTVSKQWRSILESNLFVERR. 2 Kelch repeats span residues 146 to 197 and 356 to 400; these read RDKV…CVNG and THHD…VVGY.

This Arabidopsis thaliana (Mouse-ear cress) protein is F-box/kelch-repeat protein At2g43445.